We begin with the raw amino-acid sequence, 244 residues long: uncharacterized protein (244 aa).

In terms of domain architecture, FCP1 homology spans 19-196 (ATDNRKLVIL…ACVIRYLKHL (178 aa)).

This is an uncharacterized protein from Schizosaccharomyces pombe (strain 972 / ATCC 24843) (Fission yeast).